The following is a 1528-amino-acid chain: MGIPKFFRYISERWPMILQLIEGTQIPEFDNLYLDMNSILHNCTHGNDDDVTKRLTEEEVFAKICTYIDHLFQTIKPKKIFYMAIDGVAPRAKMNQQRARRFRTAMDAEKALKKAIENGDEIPKGEPFDSNSITPGTEFMAKLTKNLQYFIHDKISNDSKWREVQIIFSGHEVPGEGEHKIMNFIRHLKSQKDFNQNTRHCIYGLDADLIMLGLSTHGPHFALLREEVTFGRRNSEKKSLEHQNFYLLHLSLLREYMELEFKEIADEMQFEYNFERILDDFILVMFVIGNDFLPNLPDLHLNKGAFPVLLQTFKEALLHTDGYINEHGKINLKRLGVWLNYLSQFELLNFEKDDIDVEWFNKQLENISLEGERKRQRVGKKLLVKQQKKLIGSIKPWLMEQLQEKLSPDLPDEEIPTLELPKDLDMKDHLEFLKEFAFDLGLFITHSKSKGSYSLKMDLDSINPDETEEEFQNRVNSIRKTIKKYQNAIIVEDKEELETEKTIYNERFERWKHEYYHDKLKFTTDSEEKVRDLAKDYVEGLQWVLYYYYRGCPSWSWYYPHHYAPRISDLAKGLDQDIEFDLSKPFTPFQQLMAVLPERSKNLIPPAFRPLMYDEQSPIHDFYPAEVQLDKNGKTADWEAVVLISFVDEKRLIEAMQPYLRKLSPEEKTRNQFGKDLIYSFNPQVDNLYKSPLGGIFSDIEHNHCVEKEYITIPLDSSEIRYGLLPNAKLGAEMLAGFPTLLSLPFTSSLEYNETMVFQQPSKQQSMVLQITDIYKTNNVTLEDFSKRHLNKVIYTRWPYLRESKLVSLTDGKTIYEYQESNDKKKFGFITKPAETQDKKLFNSLKNSMLRMYAKQKAVKIGPMEAIATVFPVTGLVRDSDGGYIKTFSPTPDYYPLQLVVESVVNEDERYKERGPIPIEEEFPLNSKVIFLGDYAYGGETTIDGYSSDRRLKITVEKKFLDSEPTIGKERLQMDHQAVKYYPSYIVSKNMHLHPLFLSKITSKFMITDATGKHINVGIPVKFEARHQKVLGYARRNPRGWEYSNLTLNLLKEYRQTFPDFFFRLSKVGNDIPVLEDLFPDTSTKDAMNLLDGIKQWLKYVSSKFIAVSLESDSLTKTSIAAVEDHIMKYAANIEGHERKQLAKVPREAVLNPRSSFALLRSQKFDLGDRVVYIQDSGKVPIFSKGTVVGYTTLSSSLSIQVLFDHEIVAGNNFGGRLRTNRGLGLDASFLLNITNRQFIYHSKASKKALEKKKQSNNRNNNTKTAHKTPSKQQSEEKLRKERAHDLLNFIKKDTNEKNSESVDNKSMGSQKDSKPAKKVLLKRPAQKSSENVQVDLANFEKAPLDNPTVAGSIFNAVANQYSDGIGSNLNIPTPPHPMNVVGGPIPGANDVADVGLPYNIPPGFMTHPNGLHPLHPHQMPYPNMNGMSIPPPAPHGFGQPISFPPPPPMTNVSDQGSRIVVNEKESQDLKKFINGKQHSNGSTIGGETKNSRKGEIKPSSGTNSTECQSPKSQSNAADRDNKKDEST.

Disordered regions lie at residues 1246-1331 (SKKA…KSSE), 1431-1455 (PPPA…NVSD), and 1470-1528 (LKKF…DEST). Over residues 1274 to 1304 (QSEEKLRKERAHDLLNFIKKDTNEKNSESVD) the composition is skewed to basic and acidic residues. The segment covering 1317–1326 (AKKVLLKRPA) has biased composition (basic residues). Polar residues predominate over residues 1500-1517 (SSGTNSTECQSPKSQSNA). Residue Thr-1506 is modified to Phosphothreonine. A Phosphoserine modification is found at Ser-1510. Residues 1518–1528 (ADRDNKKDEST) are compositionally biased toward basic and acidic residues.

The protein belongs to the 5'-3' exonuclease family. It depends on Mg(2+) as a cofactor.

Its subcellular location is the cytoplasm. It localises to the perinuclear region. The protein localises to the P-body. With respect to regulation, 3'-phosphoadenosine 5'-phosphate (pAp) is an inhibitor of KEM1. Sodium-induced GCN4 expression reduces pAp accumulation by activating HAL2 expression, and therefore maintains mRNA degradation capacity which is likely to be important for the accurate and rapid adaptation of gene expression to salt stress. Its function is as follows. Multifunctional protein that exhibits several independent functions at different levels of the cellular processes. 5'-3' exonuclease component of the nonsense-mediated mRNA decay (NMD) which is a highly conserved mRNA degradation pathway, an RNA surveillance system whose role is to identify and rid cells of mRNA with premature termination codons and thus prevents accumulation of potentially harmful truncated proteins. The NMD pathway has a second role regulating the decay of wild-type mRNAs, and especially mRNAs that are important for telomere functions. Participate in CTH2-mediated and VTS1-mediated mRNA turnover. Involved in the degradation of several hypomodified mature tRNA species and participates in the 5'-processing or the degradation of the snoRNA precursors and rRNA processing. Involved in defense against virus and suppresses viral RNA recombination by rapidly removing the 5'-truncated RNAs, the substrates of recombination, and thus reducing the chance for recombination to occur in the parental strain. Required for the assembly of the virus-like particles of the Ty3 retrotransposon and contributes to the efficient generation of narnavirus 20S RNA by playing a major role in the elimination of the non-viral upstream sequences from the primary transcripts. Degrades single-stranded DNA (ss-DNA) and can renature complementary ss-DNA as well as catalyzes the formation of heteroduplex DNA from circular ss-DNA and homologous linear ds-DNA in vitro. Acts as a microtubule-associated protein which interacts with cytoplasmic microtubules through beta-tubulin and promotes in vitro assembly of tubulin into microtubules. Associates with microtubule functions such as chromosome transmission, nuclear migration, and SPB duplication. Has also a role in G1 to S transition and is involved in nuclear fusion during karyogamy. Required for the expression of ROK1 at the post-transcriptional level and for the alpha-factor induction of the karyogamy genes KAR3 and KAR4. Plays a role in filamentous growth. This Saccharomyces cerevisiae (strain ATCC 204508 / S288c) (Baker's yeast) protein is 5'-3' exoribonuclease 1 (XRN1).